The sequence spans 142 residues: Large ribosomal subunit protein uL24 (142 aa).

Over residues 1–11 the composition is skewed to polar residues; that stretch reads MKVNPFVSSDS. The disordered stretch occupies residues 1–24; that stretch reads MKVNPFVSSDSGKSRKAHFNAPSH.

This sequence belongs to the universal ribosomal protein uL24 family.

This is Large ribosomal subunit protein uL24 (rpl-26) from Caenorhabditis elegans.